A 218-amino-acid polypeptide reads, in one-letter code: Mitochondrial import inner membrane translocase subunit TIM17-1 (218 aa).

The next 4 helical transmembrane spans lie at 19–36 (VGGA…YHLI), 66–82 (FSVW…ALVY), 89–105 (PWNS…FLSL), and 116–133 (ALVG…GIML).

It belongs to the Tim17/Tim22/Tim23 family. Component of the TIM17:23 complex at least composed of TIM23, TIM17 and TIM50. The complex interacts with the TIM44 component of the PAM complex. In terms of tissue distribution, expressed in flowers, leaves and cotyledons, and at very low levels in roots.

It localises to the mitochondrion inner membrane. Functionally, essential component of the TIM17:23 complex, a complex that mediates the translocation of transit peptide-containing proteins across the mitochondrial inner membrane. Links the inner and outer membranes. In Arabidopsis thaliana (Mouse-ear cress), this protein is Mitochondrial import inner membrane translocase subunit TIM17-1 (TIM17-1).